The primary structure comprises 108 residues: Phosphoribosyl-AMP cyclohydrolase (108 aa).

Aspartate 72 contributes to the Mg(2+) binding site. Residue cysteine 73 coordinates Zn(2+). Mg(2+) is bound by residues aspartate 74 and aspartate 76. 2 residues coordinate Zn(2+): cysteine 89 and cysteine 96.

This sequence belongs to the PRA-CH family. Homodimer. It depends on Mg(2+) as a cofactor. Zn(2+) is required as a cofactor.

The protein localises to the cytoplasm. The catalysed reaction is 1-(5-phospho-beta-D-ribosyl)-5'-AMP + H2O = 1-(5-phospho-beta-D-ribosyl)-5-[(5-phospho-beta-D-ribosylamino)methylideneamino]imidazole-4-carboxamide. It participates in amino-acid biosynthesis; L-histidine biosynthesis; L-histidine from 5-phospho-alpha-D-ribose 1-diphosphate: step 3/9. Catalyzes the hydrolysis of the adenine ring of phosphoribosyl-AMP. This chain is Phosphoribosyl-AMP cyclohydrolase, found in Archaeoglobus fulgidus (strain ATCC 49558 / DSM 4304 / JCM 9628 / NBRC 100126 / VC-16).